We begin with the raw amino-acid sequence, 616 residues long: Dihydroxy-acid dehydratase (616 aa).

Asp-81 provides a ligand contact to Mg(2+). Cys-122 contributes to the [2Fe-2S] cluster binding site. Mg(2+) contacts are provided by Asp-123 and Lys-124. An N6-carboxylysine modification is found at Lys-124. Cys-195 provides a ligand contact to [2Fe-2S] cluster. Glu-491 provides a ligand contact to Mg(2+). The Proton acceptor role is filled by Ser-517.

The protein belongs to the IlvD/Edd family. Homodimer. [2Fe-2S] cluster is required as a cofactor. Mg(2+) serves as cofactor.

The enzyme catalyses (2R)-2,3-dihydroxy-3-methylbutanoate = 3-methyl-2-oxobutanoate + H2O. It catalyses the reaction (2R,3R)-2,3-dihydroxy-3-methylpentanoate = (S)-3-methyl-2-oxopentanoate + H2O. The protein operates within amino-acid biosynthesis; L-isoleucine biosynthesis; L-isoleucine from 2-oxobutanoate: step 3/4. Its pathway is amino-acid biosynthesis; L-valine biosynthesis; L-valine from pyruvate: step 3/4. In terms of biological role, functions in the biosynthesis of branched-chain amino acids. Catalyzes the dehydration of (2R,3R)-2,3-dihydroxy-3-methylpentanoate (2,3-dihydroxy-3-methylvalerate) into 2-oxo-3-methylpentanoate (2-oxo-3-methylvalerate) and of (2R)-2,3-dihydroxy-3-methylbutanoate (2,3-dihydroxyisovalerate) into 2-oxo-3-methylbutanoate (2-oxoisovalerate), the penultimate precursor to L-isoleucine and L-valine, respectively. This Salmonella paratyphi A (strain ATCC 9150 / SARB42) protein is Dihydroxy-acid dehydratase.